A 505-amino-acid chain; its full sequence is Lysine--tRNA ligase (505 aa).

Positions 415 and 422 each coordinate Mg(2+).

The protein belongs to the class-II aminoacyl-tRNA synthetase family. As to quaternary structure, homodimer. Mg(2+) is required as a cofactor.

Its subcellular location is the cytoplasm. It catalyses the reaction tRNA(Lys) + L-lysine + ATP = L-lysyl-tRNA(Lys) + AMP + diphosphate. This Serratia proteamaculans (strain 568) protein is Lysine--tRNA ligase.